The chain runs to 169 residues: Peptide methionine sulfoxide reductase MsrA (169 aa).

Cysteine 10 is a catalytic residue.

Belongs to the MsrA Met sulfoxide reductase family.

The enzyme catalyses L-methionyl-[protein] + [thioredoxin]-disulfide + H2O = L-methionyl-(S)-S-oxide-[protein] + [thioredoxin]-dithiol. It catalyses the reaction [thioredoxin]-disulfide + L-methionine + H2O = L-methionine (S)-S-oxide + [thioredoxin]-dithiol. Functionally, has an important function as a repair enzyme for proteins that have been inactivated by oxidation. Catalyzes the reversible oxidation-reduction of methionine sulfoxide in proteins to methionine. The chain is Peptide methionine sulfoxide reductase MsrA from Streptococcus pyogenes serotype M6 (strain ATCC BAA-946 / MGAS10394).